We begin with the raw amino-acid sequence, 1179 residues long: Calcium-activated potassium channel subunit alpha-1 (1179 aa).

Residues 1–24 (MANGGGGGGGSSGGGGGGGGGGSG) show a composition bias toward gly residues. The tract at residues 1–62 (MANGGGGGGG…SSSSSSSSSV (62 aa)) is disordered. Topologically, residues 1-87 (MANGGGGGGG…VPCDSRGQRM (87 aa)) are extracellular. Positions 41–61 (SSSSSSSSSSSSSSSSSSSSS) are enriched in low complexity. The helical transmembrane segment at 88 to 108 (WWAFLASSMVTFFGGLFIILL) threads the bilayer. Over 109–179 (WRTLKYLWTV…MISAQTLTGR (71 aa)) the chain is Cytoplasmic. 3 S-palmitoyl cysteine lipidation sites follow: Cys119, Cys120, and Cys122. A helical membrane pass occupies residues 180 to 200 (VLVVLVFALSIGALVIYFIDS). The Extracellular portion of the chain corresponds to 201–215 (SNPIESCQNFYKDFT). The chain crosses the membrane as a helical span at residues 216–236 (LQIDMAFNVFFLLYFGLRFIA). Residues 237–240 (ANDK) lie on the Cytoplasmic side of the membrane. A helical membrane pass occupies residues 241 to 261 (LWFWLEVNSVVDFFTVPPVFV). Residues 262 to 265 (SVYL) are Extracellular-facing. A helical; Voltage-sensor transmembrane segment spans residues 266 to 286 (NRSWLGLRFLRALRLIQFSEI). The Cytoplasmic portion of the chain corresponds to 287-301 (LQFLNILKTSNSIKL). A helical membrane pass occupies residues 302–322 (VNLLSIFISTWLTAAGFIHLV). The Extracellular segment spans residues 323 to 336 (ENSGDPWENFQNNQ). Residues 337–359 (ALTYWECVYLLMVTMSTVGYGDV) constitute an intramembrane region (pore-forming). Residues 353–356 (TVGY) carry the Selectivity for potassium motif. At 360–368 (YAKTTLGRL) the chain is on the extracellular side. The helical transmembrane segment at 369–389 (FMVFFILGGLAMFASYVPEII) threads the bilayer. Residues 390–1179 (ELIGNRKKYG…KQKYVQEERL (790 aa)) are Cytoplasmic-facing. The region spanning 408 to 550 (RKHIVVCGHI…WNWKEGDDAI (143 aa)) is the RCK N-terminal 1 domain. Residues Glu440, Gln463, and Glu465 each contribute to the Mg(2+) site. A segment S7 region spans residues 557–577 (LGFIAQSCLAQGLSTMLANLF). Residues 614 to 634 (LSFPTVCELCFVKLKLLMIAI) form a segment S8 region. The tract at residues 678–682 (CKACH) is heme-binding motif. The interval 702-730 (EQPSTLSPKKKQRNGGMRNSPNSSPKLMR) is disordered. Residue Thr706 is modified to Phosphothreonine. Residues Ser708, Ser721, and Ser725 each carry the phosphoserine modification. The interval 780–800 (VLSGHVVVCIFGDVSSALIGL) is segment S9. Residues 782-926 (SGHVVVCIFG…MDRSSPDNSP (145 aa)) enclose the RCK N-terminal 2 domain. Thr913 bears the Phosphothreonine mark. A phosphoserine mark is found at Ser921 and Ser925. The Calcium bowl signature appears at 946–968 (TELVNDTNVQFLDQDDDDDPDTE). Ca(2+) contacts are provided by Gln955, Asp958, Asp961, and Asp963. Positions 975-995 (FACGTAFAVSVLDSLMSATYF) are segment S10. Low complexity predominate over residues 1129–1154 (RASLSHSSHSSQSSSKKSSSVHSIPS). Residues 1129–1179 (RASLSHSSHSSQSSSKKSSSVHSIPSTANRQNRPKSRESRDKQKYVQEERL) are disordered. A compositionally biased stretch (basic and acidic residues) spans 1163–1179 (KSRESRDKQKYVQEERL). Phosphoserine is present on residues Ser1164 and Ser1167.

This sequence belongs to the potassium channel family. Calcium-activated (TC 1.A.1.3) subfamily. KCa1.1/KCNMA1 sub-subfamily. Homotetramer; which constitutes the calcium-activated potassium channel. Interacts with beta subunits KCNMB1, KCNMB2, KCNMB3 and KCNMB4. Interacts with gamma subunits LRRC26, LRRC38, LRRC52 and LRRC55. Beta and gamma subunits are accessory, and modulate its activity. Interacts with RAB11B. Post-translationally, phosphorylated. Phosphorylation by kinases such as PKA and/or PKG. In smooth muscles, phosphorylation affects its activity. In terms of processing, palmitoylation by ZDHHC22 and ZDHHC23 within the intracellular linker between the S0 and S1 transmembrane domains regulates localization to the plasma membrane. Depalmitoylated by LYPLA1 and LYPLAL1, leading to retard exit from the trans-Golgi network.

It is found in the cell membrane. It localises to the endoplasmic reticulum membrane. The catalysed reaction is K(+)(in) = K(+)(out). Ethanol and carbon monoxide-bound heme increase channel activation. Heme inhibits channel activation. Its function is as follows. Potassium channel activated by both membrane depolarization or increase in cytosolic Ca(2+) that mediates export of K(+). It is also activated by the concentration of cytosolic Mg(2+). Its activation dampens the excitatory events that elevate the cytosolic Ca(2+) concentration and/or depolarize the cell membrane. It therefore contributes to repolarization of the membrane potential. Plays a key role in controlling excitability in a number of systems, such as regulation of the contraction of smooth muscle, the tuning of hair cells in the cochlea, regulation of transmitter release, and innate immunity. In smooth muscles, its activation by high level of Ca(2+), caused by ryanodine receptors in the sarcoplasmic reticulum, regulates the membrane potential. In cochlea cells, its number and kinetic properties partly determine the characteristic frequency of each hair cell and thereby helps to establish a tonotopic map. Kinetics of KCNMA1 channels are determined by alternative splicing, phosphorylation status and its combination with modulating beta subunits. Highly sensitive to both iberiotoxin (IbTx) and charybdotoxin (CTX). Potassium channel activated by both membrane depolarization or increase in cytosolic Ca(2+) that mediates export of K(+). This chain is Calcium-activated potassium channel subunit alpha-1 (KCNMA1), found in Oryctolagus cuniculus (Rabbit).